A 142-amino-acid polypeptide reads, in one-letter code: Organic hydroperoxide resistance protein-like 2 (142 aa).

The protein belongs to the OsmC/Ohr family.

In Staphylococcus epidermidis (strain ATCC 12228 / FDA PCI 1200), this protein is Organic hydroperoxide resistance protein-like 2.